Consider the following 93-residue polypeptide: Acylphosphatase (93 aa).

The Acylphosphatase-like domain maps to 6-93 (RARIVVSGRV…GDLGAFEIRF (88 aa)). Catalysis depends on residues R21 and N39.

Belongs to the acylphosphatase family.

It catalyses the reaction an acyl phosphate + H2O = a carboxylate + phosphate + H(+). The protein is Acylphosphatase (acyP) of Anaeromyxobacter dehalogenans (strain 2CP-C).